The following is a 424-amino-acid chain: Elongation factor 1-alpha (424 aa).

Residues 5–223 (KPHLNLITIG…DAFKVPEKPI (219 aa)) enclose the tr-type G domain. The G1 stretch occupies residues 14-21 (GHVDHGKS). 14–21 (GHVDHGKS) provides a ligand contact to GTP. Mg(2+) is bound at residue Ser21. Residues 70 to 74 (GVTID) are G2. Positions 91–94 (DAPG) are G3. Residues 91–95 (DAPGH) and 148–151 (NKMD) contribute to the GTP site. Residues 148 to 151 (NKMD) are G4. The G5 stretch occupies residues 187–189 (SGY).

It belongs to the TRAFAC class translation factor GTPase superfamily. Classic translation factor GTPase family. EF-Tu/EF-1A subfamily.

The protein resides in the cytoplasm. The catalysed reaction is GTP + H2O = GDP + phosphate + H(+). Functionally, GTP hydrolase that promotes the GTP-dependent binding of aminoacyl-tRNA to the A-site of ribosomes during protein biosynthesis. The polypeptide is Elongation factor 1-alpha (Thermoplasma acidophilum (strain ATCC 25905 / DSM 1728 / JCM 9062 / NBRC 15155 / AMRC-C165)).